Reading from the N-terminus, the 307-residue chain is Porphobilinogen deaminase (307 aa).

At Cys241 the chain carries S-(dipyrrolylmethanemethyl)cysteine.

The protein belongs to the HMBS family. As to quaternary structure, monomer. The cofactor is dipyrromethane.

It catalyses the reaction 4 porphobilinogen + H2O = hydroxymethylbilane + 4 NH4(+). It functions in the pathway porphyrin-containing compound metabolism; protoporphyrin-IX biosynthesis; coproporphyrinogen-III from 5-aminolevulinate: step 2/4. Functionally, tetrapolymerization of the monopyrrole PBG into the hydroxymethylbilane pre-uroporphyrinogen in several discrete steps. The protein is Porphobilinogen deaminase of Coxiella burnetii (strain CbuG_Q212) (Coxiella burnetii (strain Q212)).